The primary structure comprises 1096 residues: Eukaryotic translation initiation factor 3 subunit A (1096 aa).

The PCI domain occupies 323–502 (QATRVLLATL…GSIHFGAADA (180 aa)). 3 coiled-coil regions span residues 591–643 (SERQ…IDRK), 677–761 (SVLR…RMQK), and 811–839 (KEGA…ERRA). The span at 808–852 (ELPKEGAEERMASAREVAEQTRRDEQEKERRAVRESQRPSKREIV) shows a compositional bias: basic and acidic residues. Residues 808-1096 (ELPKEGAEER…ADDDRNWRQK (289 aa)) form a disordered region. The segment covering 865-875 (AQPTQPRTISS) has biased composition (polar residues). Composition is skewed to basic and acidic residues over residues 878 to 890 (FGER…RYRE), 933 to 942 (SNREQARGEA), and 955 to 973 (QRDR…KRGE). Positions 1008-1023 (DSSQRTSAATPTTQPW) are enriched in polar residues. A compositionally biased stretch (basic and acidic residues) spans 1085–1096 (GAADDDRNWRQK).

This sequence belongs to the eIF-3 subunit A family. In terms of assembly, component of the eukaryotic translation initiation factor 3 (eIF-3) complex.

It is found in the cytoplasm. Its function is as follows. RNA-binding component of the eukaryotic translation initiation factor 3 (eIF-3) complex, which is involved in protein synthesis of a specialized repertoire of mRNAs and, together with other initiation factors, stimulates binding of mRNA and methionyl-tRNAi to the 40S ribosome. The eIF-3 complex specifically targets and initiates translation of a subset of mRNAs involved in cell proliferation. The chain is Eukaryotic translation initiation factor 3 subunit A from Brugia malayi (Filarial nematode worm).